The primary structure comprises 211 residues: Large ribosomal subunit protein uL4 (211 aa).

The interval 52 to 79 (GRAEVHGSNSKPYSQKGTGRARRGDKKS) is disordered. Residues 58–68 (GSNSKPYSQKG) show a composition bias toward polar residues.

Belongs to the universal ribosomal protein uL4 family. As to quaternary structure, part of the 50S ribosomal subunit.

Its function is as follows. One of the primary rRNA binding proteins, this protein initially binds near the 5'-end of the 23S rRNA. It is important during the early stages of 50S assembly. It makes multiple contacts with different domains of the 23S rRNA in the assembled 50S subunit and ribosome. In terms of biological role, forms part of the polypeptide exit tunnel. This is Large ribosomal subunit protein uL4 from Treponema denticola (strain ATCC 35405 / DSM 14222 / CIP 103919 / JCM 8153 / KCTC 15104).